A 287-amino-acid chain; its full sequence is N-methyltransferase verN (287 aa).

Belongs to the methyltransferase superfamily. LaeA methyltransferase family.

Its pathway is mycotoxin biosynthesis. Its function is as follows. N-methyltransferase; part of the gene cluster that mediates the biosynthesis of 11'-deoxyverticillin A, one of the dimeric epipolythiodioxopiperazines (ETPs) from the verticillin family that act as mycotoxins. 11'-deoxyverticillin A is required for normal conidiation. The nonribosomal peptide synthetase verP is speculated to be responsible for condensation of amino acids to form the carbon skeleton of verticillin, whereas the cluster-specific tailoring enzymes are involved in further modifications leading to the production of 11'-deoxyverticillin A. This chain is N-methyltransferase verN, found in Clonostachys rogersoniana.